The following is a 231-amino-acid chain: MLEQLKADVLAANLALPAHHLVTFTWGNVSAVDETRQWMVIKPSGVEYDVMTADDMVVVEIASGKVVEGSKKPSSDTPTHLALYRRYAEIGGIVHTHSRHATIWSQAGLDLPAWGTTHADYFYGAIPCTRQMTAEEINGEYEYQTGEVIIETFEERGRSPAQIPAVLVHSHGPFAWGKNAADAVHNAVVLEECAYMGLFSRQLAPQLPAMQNELLDKHYLRKHGANAYYGQ.

Residues Gly-27 to Asn-28, Ser-44 to Gly-45, and Ser-74 to Ser-75 each bind substrate. Positions 76, 95, and 97 each coordinate Zn(2+). Asp-120 functions as the Proton donor/acceptor in the catalytic mechanism. A Zn(2+)-binding site is contributed by His-171. The active-site Proton donor/acceptor is the Tyr-229.

Belongs to the aldolase class II family. AraD/FucA subfamily. Zn(2+) serves as cofactor.

It carries out the reaction L-ribulose 5-phosphate = D-xylulose 5-phosphate. Catalyzes the interconversion of L-ribulose 5-phosphate (LRu5P) and D-xylulose 5-phosphate (D-Xu5P) via a retroaldol/aldol mechanism (carbon-carbon bond cleavage analogous to a class II aldolase reaction). May be involved in the utilization of 2,3-diketo-L-gulonate. In Escherichia coli (strain K12), this protein is L-ribulose-5-phosphate 4-epimerase SgbE.